Consider the following 480-residue polypeptide: Protein nucleotidyltransferase YdiU (480 aa).

Residues G86, G88, R89, K109, D121, G122, R172, and R179 each coordinate ATP. The Proton acceptor role is filled by D248. Mg(2+) is bound by residues N249 and D258. Residue D258 coordinates ATP.

This sequence belongs to the SELO family. Mg(2+) serves as cofactor. It depends on Mn(2+) as a cofactor.

The enzyme catalyses L-seryl-[protein] + ATP = 3-O-(5'-adenylyl)-L-seryl-[protein] + diphosphate. The catalysed reaction is L-threonyl-[protein] + ATP = 3-O-(5'-adenylyl)-L-threonyl-[protein] + diphosphate. It catalyses the reaction L-tyrosyl-[protein] + ATP = O-(5'-adenylyl)-L-tyrosyl-[protein] + diphosphate. It carries out the reaction L-histidyl-[protein] + UTP = N(tele)-(5'-uridylyl)-L-histidyl-[protein] + diphosphate. The enzyme catalyses L-seryl-[protein] + UTP = O-(5'-uridylyl)-L-seryl-[protein] + diphosphate. The catalysed reaction is L-tyrosyl-[protein] + UTP = O-(5'-uridylyl)-L-tyrosyl-[protein] + diphosphate. Its function is as follows. Nucleotidyltransferase involved in the post-translational modification of proteins. It can catalyze the addition of adenosine monophosphate (AMP) or uridine monophosphate (UMP) to a protein, resulting in modifications known as AMPylation and UMPylation. The chain is Protein nucleotidyltransferase YdiU from Salmonella agona (strain SL483).